The primary structure comprises 555 residues: Splicing factor U2af large subunit A (555 aa).

The disordered stretch occupies residues 1-165; sequence MRDYEGNGVD…ISGFDMAPPT (165 aa). 2 stretches are compositionally biased toward basic and acidic residues: residues 23-81 and 90-127; these read ISRD…EKDR and RDRS…DRED. Residues 143-155 are compositionally biased toward basic residues; that stretch reads SKSRSRSPSKSKR. 3 consecutive RRM domains span residues 221-304, 341-419, and 460-546; these read RRVY…RPSD, DRIF…RANQ, and EVVT…YPEN.

It belongs to the splicing factor SR family. Expressed in stems, leaves and apical buds.

Its subcellular location is the nucleus. In terms of biological role, necessary for the splicing of pre-mRNA. Binds to the U -enriched regions of plant introns. The protein is Splicing factor U2af large subunit A (U2AF65A) of Nicotiana plumbaginifolia (Leadwort-leaved tobacco).